We begin with the raw amino-acid sequence, 359 residues long: GTP cyclohydrolase FolE2 (359 aa).

It belongs to the GTP cyclohydrolase IV family.

The catalysed reaction is GTP + H2O = 7,8-dihydroneopterin 3'-triphosphate + formate + H(+). It participates in cofactor biosynthesis; 7,8-dihydroneopterin triphosphate biosynthesis; 7,8-dihydroneopterin triphosphate from GTP: step 1/1. Functionally, converts GTP to 7,8-dihydroneopterin triphosphate. In Cereibacter sphaeroides (strain ATCC 17029 / ATH 2.4.9) (Rhodobacter sphaeroides), this protein is GTP cyclohydrolase FolE2.